The primary structure comprises 1230 residues: Soluble starch synthase 3, chloroplastic/amyloplastic (1230 aa).

The transit peptide at 1–60 (MDVPFPLHRSLSCTSVSNAITHLKIKPILGFVSHGTTSLSVQSSSWRKDGMVTGVSFSIC) directs the protein to the chloroplast. The tract at residues 66-189 (RRRRKVSTPR…KDAVKLNKSK (124 aa)) is disordered. Basic and acidic residues predominate over residues 124–145 (VEARVETSDDDTKGVVRDHKFL). The segment covering 152–170 (NGSTKSISMSPVRVSSQFV) has biased composition (polar residues). The span at 177–189 (GDDKDAVKLNKSK) shows a compositional bias: basic and acidic residues. K794 lines the ADP-alpha-D-glucose pocket.

This sequence belongs to the glycosyltransferase 1 family. Bacterial/plant glycogen synthase subfamily. As to expression, tuber, sink and source leaves.

It localises to the plastid. The protein localises to the chloroplast. It is found in the amyloplast. It carries out the reaction [(1-&gt;4)-alpha-D-glucosyl](n) + ADP-alpha-D-glucose = [(1-&gt;4)-alpha-D-glucosyl](n+1) + ADP + H(+). The protein operates within glycan biosynthesis; starch biosynthesis. Functionally, may account for most of the soluble starch synthase activity in the tubers. Contributes only a tiny percentage of the granule-bound activity, but may also contribute to the deposition of transient starch in chloroplasts of leaves. The chain is Soluble starch synthase 3, chloroplastic/amyloplastic (SS3) from Solanum tuberosum (Potato).